The sequence spans 478 residues: Glutamate--tRNA ligase (478 aa).

Positions 9-19 match the 'HIGH' region motif; that stretch reads PSPTGLLHIGT. Positions 248–252 match the 'KMSKS' region motif; it reads KLSKR. K251 serves as a coordination point for ATP.

This sequence belongs to the class-I aminoacyl-tRNA synthetase family. Glutamate--tRNA ligase type 1 subfamily. Monomer.

It localises to the cytoplasm. It catalyses the reaction tRNA(Glu) + L-glutamate + ATP = L-glutamyl-tRNA(Glu) + AMP + diphosphate. Catalyzes the attachment of glutamate to tRNA(Glu) in a two-step reaction: glutamate is first activated by ATP to form Glu-AMP and then transferred to the acceptor end of tRNA(Glu). The sequence is that of Glutamate--tRNA ligase from Prochlorococcus marinus (strain MIT 9515).